A 422-amino-acid chain; its full sequence is Carboxypeptidase B2 (422 aa).

The N-terminal stretch at methionine 1 to alanine 21 is a signal peptide. Positions phenylalanine 22–arginine 113 are cleaved as a propeptide — activation peptide. Asparagine 43, asparagine 72, asparagine 84, and asparagine 107 each carry an N-linked (GlcNAc...) asparagine glycan. The Peptidase M14 domain maps to glutamine 121 to valine 418. Cysteine 177 and cysteine 190 are oxidised to a cystine. Histidine 180 and glutamate 183 together coordinate Zn(2+). Residues histidine 180–glutamate 183 and arginine 238 each bind substrate. The N-linked (GlcNAc...) asparagine glycan is linked to asparagine 240. 2 disulfide bridges follow: cysteine 249/cysteine 273 and cysteine 264/cysteine 278. Substrate is bound at residue asparagine 255 to arginine 256. Histidine 309 is a Zn(2+) binding site. Serine 310 to tyrosine 311 contacts substrate. An N-linked (GlcNAc...) asparagine glycan is attached at asparagine 322. Substrate is bound at residue tyrosine 362. The active-site Proton donor/acceptor is the glutamate 384.

Belongs to the peptidase M14 family. Zn(2+) serves as cofactor. Plasma; synthesized in the liver.

The protein resides in the secreted. The enzyme catalyses Release of C-terminal Arg and Lys from a polypeptide.. With respect to regulation, TAFI/CPB2 is unique among carboxypeptidases in that it spontaneously inactivates with a short half-life, a property that is crucial for its role in controlling blood clot lysis. The zymogen is stabilized by interactions with the activation peptide. Release of the activation peptide increases a dynamic flap mobility and in time this leads to conformational changes that disrupt the catalytic site and expose a cryptic thrombin-cleavage site present at Arg-323. Its function is as follows. Cleaves C-terminal arginine or lysine residues from biologically active peptides such as kinins or anaphylatoxins in the circulation thereby regulating their activities. Down-regulates fibrinolysis by removing C-terminal lysine residues from fibrin that has already been partially degraded by plasmin. In Rattus norvegicus (Rat), this protein is Carboxypeptidase B2 (Cpb2).